We begin with the raw amino-acid sequence, 206 residues long: Triosephosphate isomerase (206 aa).

The Electrophile role is filled by histidine 76. Residue glutamate 146 is the Proton acceptor of the active site.

This sequence belongs to the triosephosphate isomerase family. As to quaternary structure, homodimer.

It catalyses the reaction D-glyceraldehyde 3-phosphate = dihydroxyacetone phosphate. The protein operates within carbohydrate biosynthesis; gluconeogenesis. Its pathway is carbohydrate degradation; glycolysis; D-glyceraldehyde 3-phosphate from glycerone phosphate: step 1/1. The protein is Triosephosphate isomerase (Tpi) of Aedes togoi (Mosquito).